The sequence spans 1212 residues: Histone demethylase UTY (1212 aa).

TPR repeat units lie at residues 88-121, 125-158, 165-193, 200-233, 245-278, 279-312, 313-346, and 347-380; these read SDFF…QTDY, AAFL…DPNF, HLRL…IDCN, VEIQ…ESLP, GWMH…DPNS, GQSW…SEAS, ADTW…DHGH, and AAAW…KSCN. The span at 530–539 shows a compositional bias: basic and acidic residues; it reads FTKESKDSRS. Positions 530-555 are disordered; that stretch reads FTKESKDSRSKSLTSKTSRKDRDTSN. The residue at position 752 (Thr752) is a Phosphothreonine. The disordered stretch occupies residues 865 to 886; it reads RRTQVKDYSDNESTCSDNSGRR. One can recognise a JmjC domain in the interval 907 to 1070; the sequence is KWKLQLHELT…YKLAVERYEW (164 aa). Fe cation contacts are provided by His958, Glu960, and His1038. Zn(2+) contacts are provided by Cys1143, Cys1146, Cys1170, and Cys1173.

The protein belongs to the UTX family. In terms of assembly, binds TLE1 and TLE2. Requires L-ascorbate as cofactor. Fe(2+) serves as cofactor.

The protein resides in the nucleus. The catalysed reaction is N(6),N(6),N(6)-trimethyl-L-lysyl(27)-[histone H3] + 2 2-oxoglutarate + 2 O2 = N(6)-methyl-L-lysyl(27)-[histone H3] + 2 formaldehyde + 2 succinate + 2 CO2. Male-specific histone demethylase that catalyzes trimethylated 'Lys-27' (H3K27me3) demethylation in histone H3. Has relatively low KDM activity. This chain is Histone demethylase UTY (Uty), found in Mus musculus (Mouse).